The following is a 298-amino-acid chain: Ornithine carbamoyltransferase (298 aa).

Residues 50–53, Gln77, Arg101, and 128–131 each bind carbamoyl phosphate; these read STRT and HPCQ. L-ornithine-binding positions include Asn159, Asp216, and 220–221; that span reads SM. Residues 256 to 257 and Arg284 contribute to the carbamoyl phosphate site; that span reads CL.

Belongs to the aspartate/ornithine carbamoyltransferase superfamily. OTCase family.

The protein localises to the cytoplasm. The catalysed reaction is carbamoyl phosphate + L-ornithine = L-citrulline + phosphate + H(+). The protein operates within amino-acid biosynthesis; L-arginine biosynthesis; L-arginine from L-ornithine and carbamoyl phosphate: step 1/3. Its function is as follows. Reversibly catalyzes the transfer of the carbamoyl group from carbamoyl phosphate (CP) to the N(epsilon) atom of ornithine (ORN) to produce L-citrulline. The protein is Ornithine carbamoyltransferase of Methylococcus capsulatus (strain ATCC 33009 / NCIMB 11132 / Bath).